The chain runs to 111 residues: Thioredoxin 2 (111 aa).

The region spanning S2–N109 is the Thioredoxin domain. C33 and C36 form a disulfide bridge.

The protein belongs to the thioredoxin family.

Functionally, participates in various redox reactions through the reversible oxidation of its active center dithiol to a disulfide and catalyzes dithiol-disulfide exchange reactions. This chain is Thioredoxin 2 (trxB), found in Nostoc sp. (strain PCC 7120 / SAG 25.82 / UTEX 2576).